The primary structure comprises 543 residues: Protein GPR108 (543 aa).

A signal peptide spans 1–32 (MAVSERRGLGRGSPAEWGQRLLLVLLLGGCSG). Residues Asn-57 and Asn-109 are each glycosylated (N-linked (GlcNAc...) asparagine). Positions 149 to 186 (SKPGLPKPQATVPRKVDGGGTSAASKPKSTPAVIQGPS) are disordered. Asn-200, Asn-204, and Asn-228 each carry an N-linked (GlcNAc...) asparagine glycan. A run of 7 helical transmembrane segments spans residues 263 to 283 (LYMV…SILC), 292 to 312 (IHWL…FHSI), 336 to 356 (LLKG…WAFI), 367 to 387 (VFGI…IIES), 401 to 421 (ILFL…VWSI), 449 to 469 (VMVI…QVAV), and 473 to 493 (WQWL…VLTG). Asn-534 is a glycosylation site (N-linked (GlcNAc...) asparagine).

This sequence belongs to the LU7TM family.

The protein resides in the golgi apparatus. Its subcellular location is the cis-Golgi network membrane. It localises to the trans-Golgi network membrane. The protein localises to the golgi apparatus membrane. Its function is as follows. May play a role in intracellular immune modulation by activating NF-kappaB response and attenuating Toll-like-receptor response. Functionally, (Microbial infection) Plays an essential function in adeno-associated virus (AAV) transduction across multiple serotypes except AAV5. May play a critical role in mediating the endosomal virus escape or in the AAV virions trafficking from endosomes to the nucleus. This chain is Protein GPR108, found in Homo sapiens (Human).